A 33-amino-acid chain; its full sequence is Protamine-M6/M7 (33 aa).

The disordered stretch occupies residues 1–33 (PRRRRETSRPIRRRRRARRAPIRRRRRVVRRRR).

As to expression, testis.

It is found in the nucleus. Its subcellular location is the chromosome. Functionally, protamines substitute for histones in the chromatin of sperm during the haploid phase of spermatogenesis. They compact sperm DNA into a highly condensed, stable and inactive complex. In Mugil cephalus (Flathead mullet), this protein is Protamine-M6/M7.